Here is a 464-residue protein sequence, read N- to C-terminus: ATP synthase subunit beta (464 aa).

Residue Gly-148–Thr-155 coordinates ATP.

Belongs to the ATPase alpha/beta chains family. As to quaternary structure, F-type ATPases have 2 components, CF(1) - the catalytic core - and CF(0) - the membrane proton channel. CF(1) has five subunits: alpha(3), beta(3), gamma(1), delta(1), epsilon(1). CF(0) has three main subunits: a(1), b(2) and c(9-12). The alpha and beta chains form an alternating ring which encloses part of the gamma chain. CF(1) is attached to CF(0) by a central stalk formed by the gamma and epsilon chains, while a peripheral stalk is formed by the delta and b chains.

Its subcellular location is the cell inner membrane. The catalysed reaction is ATP + H2O + 4 H(+)(in) = ADP + phosphate + 5 H(+)(out). In terms of biological role, produces ATP from ADP in the presence of a proton gradient across the membrane. The catalytic sites are hosted primarily by the beta subunits. The protein is ATP synthase subunit beta of Marinobacter nauticus (strain ATCC 700491 / DSM 11845 / VT8) (Marinobacter aquaeolei).